The primary structure comprises 910 residues: Putative coatomer subunit beta'-3 (910 aa).

9 WD repeats span residues 13-52 (QRSE…MVKS), 55-94 (VTEL…KVKV), 97-136 (AHTD…MCTQ), 140-180 (GHSH…PNFT), 183-224 (GHSK…CVQT), 227-266 (GHAH…LENT), 269-309 (YGLE…ASMD), 351-393 (TCDL…GSAL), and 461-501 (RIDV…SHLD). The span at 865–884 (ENGVEESQEDAVEVDVEADG) shows a compositional bias: acidic residues. Residues 865 to 910 (ENGVEESQEDAVEVDVEADGSTDGTVLVNGNDTEEQWGTNNEESLA) form a disordered region. Residues 886 to 910 (TDGTVLVNGNDTEEQWGTNNEESLA) show a composition bias toward polar residues.

Belongs to the WD repeat COPB2 family. As to quaternary structure, oligomeric complex that consists of at least the alpha, beta, beta', gamma, delta, epsilon and zeta subunits.

The protein resides in the cytoplasm. It localises to the golgi apparatus membrane. Its subcellular location is the cytoplasmic vesicle. It is found in the COPI-coated vesicle membrane. Its function is as follows. The coatomer is a cytosolic protein complex that binds to dilysine motifs and reversibly associates with Golgi non-clathrin-coated vesicles, which further mediate biosynthetic protein transport from the ER, via the Golgi up to the trans Golgi network. Coatomer complex is required for budding from Golgi membranes, and is essential for the retrograde Golgi-to-ER transport of dilysine-tagged proteins. The polypeptide is Putative coatomer subunit beta'-3 (Oryza sativa subsp. japonica (Rice)).